The primary structure comprises 194 residues: Holliday junction branch migration complex subunit RuvA (194 aa).

The domain I stretch occupies residues 1–64 (MIGRLRGILA…EDSVALYGFL (64 aa)). The interval 65 to 140 (REGERRLFRD…RAADFSSGAP (76 aa)) is domain II. Residues 140-144 (PITGQ) are flexible linker. The segment at 145–194 (LGPDAVSEATVALQQLGYKPAEAARMARDAGAEGDEVATVIRKALQAALR) is domain III.

It belongs to the RuvA family. In terms of assembly, homotetramer. Forms an RuvA(8)-RuvB(12)-Holliday junction (HJ) complex. HJ DNA is sandwiched between 2 RuvA tetramers; dsDNA enters through RuvA and exits via RuvB. An RuvB hexamer assembles on each DNA strand where it exits the tetramer. Each RuvB hexamer is contacted by two RuvA subunits (via domain III) on 2 adjacent RuvB subunits; this complex drives branch migration. In the full resolvosome a probable DNA-RuvA(4)-RuvB(12)-RuvC(2) complex forms which resolves the HJ.

It is found in the cytoplasm. The RuvA-RuvB-RuvC complex processes Holliday junction (HJ) DNA during genetic recombination and DNA repair, while the RuvA-RuvB complex plays an important role in the rescue of blocked DNA replication forks via replication fork reversal (RFR). RuvA specifically binds to HJ cruciform DNA, conferring on it an open structure. The RuvB hexamer acts as an ATP-dependent pump, pulling dsDNA into and through the RuvAB complex. HJ branch migration allows RuvC to scan DNA until it finds its consensus sequence, where it cleaves and resolves the cruciform DNA. This chain is Holliday junction branch migration complex subunit RuvA, found in Xanthomonas euvesicatoria pv. vesicatoria (strain 85-10) (Xanthomonas campestris pv. vesicatoria).